The primary structure comprises 337 residues: Anthranilate phosphoribosyltransferase (337 aa).

5-phospho-alpha-D-ribose 1-diphosphate contacts are provided by residues Gly-81, Gly-84–Asp-85, Ser-89, Asn-91–Thr-94, Lys-109–Ser-117, and Ala-121. Gly-81 contacts anthranilate. Mg(2+) is bound at residue Ser-93. Asn-112 provides a ligand contact to anthranilate. Residue Arg-167 coordinates anthranilate. Mg(2+)-binding residues include Asp-226 and Glu-227.

This sequence belongs to the anthranilate phosphoribosyltransferase family. In terms of assembly, homodimer. The cofactor is Mg(2+).

The catalysed reaction is N-(5-phospho-beta-D-ribosyl)anthranilate + diphosphate = 5-phospho-alpha-D-ribose 1-diphosphate + anthranilate. It functions in the pathway amino-acid biosynthesis; L-tryptophan biosynthesis; L-tryptophan from chorismate: step 2/5. Catalyzes the transfer of the phosphoribosyl group of 5-phosphorylribose-1-pyrophosphate (PRPP) to anthranilate to yield N-(5'-phosphoribosyl)-anthranilate (PRA). This is Anthranilate phosphoribosyltransferase from Methylorubrum extorquens (strain CM4 / NCIMB 13688) (Methylobacterium extorquens).